The primary structure comprises 86 residues: DNA-directed RNA polymerase subunit omega (86 aa).

This sequence belongs to the RNA polymerase subunit omega family. In terms of assembly, the RNAP catalytic core consists of 2 alpha, 1 beta, 1 beta' and 1 omega subunit. When a sigma factor is associated with the core the holoenzyme is formed, which can initiate transcription.

It carries out the reaction RNA(n) + a ribonucleoside 5'-triphosphate = RNA(n+1) + diphosphate. Functionally, promotes RNA polymerase assembly. Latches the N- and C-terminal regions of the beta' subunit thereby facilitating its interaction with the beta and alpha subunits. This Agathobacter rectalis (strain ATCC 33656 / DSM 3377 / JCM 17463 / KCTC 5835 / VPI 0990) (Eubacterium rectale) protein is DNA-directed RNA polymerase subunit omega.